Consider the following 448-residue polypeptide: Cysteine--tRNA ligase (448 aa).

Residue C29 participates in Zn(2+) binding. A 'HIGH' region motif is present at residues 31–41; it reads PTVYDTAHIGN. Basic and acidic residues predominate over residues 79-91; sequence ATTGADRGADQAH. The interval 79–106 is disordered; that stretch reads ATTGADRGADQAHRGPLPRRHGPLNAAP. C206 and E235 together coordinate Zn(2+). The 'KMSKS' region motif lies at 265 to 269; sequence RMSKS. K268 contributes to the ATP binding site.

This sequence belongs to the class-I aminoacyl-tRNA synthetase family. Monomer. Zn(2+) serves as cofactor.

The protein localises to the cytoplasm. The catalysed reaction is tRNA(Cys) + L-cysteine + ATP = L-cysteinyl-tRNA(Cys) + AMP + diphosphate. The sequence is that of Cysteine--tRNA ligase (cysS) from Azospirillum brasilense.